Reading from the N-terminus, the 277-residue chain is Thymidylate synthase (277 aa).

R21 serves as a coordination point for dUMP. H51 serves as a coordination point for (6R)-5,10-methylene-5,6,7,8-tetrahydrofolate. 126–127 is a dUMP binding site; it reads RR. Residue C159 is the Nucleophile of the active site. DUMP is bound by residues 179–182, N190, and 220–222; these read RSAD and HLY. D182 is a (6R)-5,10-methylene-5,6,7,8-tetrahydrofolate binding site. Position 276 (S276) interacts with (6R)-5,10-methylene-5,6,7,8-tetrahydrofolate.

It belongs to the thymidylate synthase family. Bacterial-type ThyA subfamily. Homodimer.

The protein resides in the cytoplasm. It catalyses the reaction dUMP + (6R)-5,10-methylene-5,6,7,8-tetrahydrofolate = 7,8-dihydrofolate + dTMP. Its pathway is pyrimidine metabolism; dTTP biosynthesis. In terms of biological role, catalyzes the reductive methylation of 2'-deoxyuridine-5'-monophosphate (dUMP) to 2'-deoxythymidine-5'-monophosphate (dTMP) while utilizing 5,10-methylenetetrahydrofolate (mTHF) as the methyl donor and reductant in the reaction, yielding dihydrofolate (DHF) as a by-product. This enzymatic reaction provides an intracellular de novo source of dTMP, an essential precursor for DNA biosynthesis. The polypeptide is Thymidylate synthase (Hydrogenovibrio crunogenus (strain DSM 25203 / XCL-2) (Thiomicrospira crunogena)).